Consider the following 270-residue polypeptide: 3-methyl-2-oxobutanoate hydroxymethyltransferase (270 aa).

The Mg(2+) site is built by Asp43 and Asp82. Residues 43–44 (DS), Asp82, and Lys110 contribute to the 3-methyl-2-oxobutanoate site. Glu112 contacts Mg(2+). Catalysis depends on Glu179, which acts as the Proton acceptor.

This sequence belongs to the PanB family. In terms of assembly, homodecamer; pentamer of dimers. Mg(2+) serves as cofactor.

The protein resides in the cytoplasm. The catalysed reaction is 3-methyl-2-oxobutanoate + (6R)-5,10-methylene-5,6,7,8-tetrahydrofolate + H2O = 2-dehydropantoate + (6S)-5,6,7,8-tetrahydrofolate. It functions in the pathway cofactor biosynthesis; (R)-pantothenate biosynthesis; (R)-pantoate from 3-methyl-2-oxobutanoate: step 1/2. Its function is as follows. Catalyzes the reversible reaction in which hydroxymethyl group from 5,10-methylenetetrahydrofolate is transferred onto alpha-ketoisovalerate to form ketopantoate. This chain is 3-methyl-2-oxobutanoate hydroxymethyltransferase, found in Psychrobacter sp. (strain PRwf-1).